Reading from the N-terminus, the 149-residue chain is Calmodulin (149 aa).

An N-acetylalanine modification is found at A2. 4 consecutive EF-hand domains span residues 8–43 (EQIAEFKEAFSLFDKDGDGTITTKELGTVMRSLGQN), 44–79 (PTEAELQDMINEVDADGNGTIDFPEFLSLMARKMKD), 81–116 (DTEEELIEAFKVFDRDGNGLISAAELRHVMTNLGEK), and 117–149 (LTDEEVDEMIREADIDGDGHINYEEFVRMMMAK). Ca(2+)-binding residues include D21, D23, D25, T27, E32, D57, D59, N61, T63, E68, D94, D96, N98, and E105. N6,N6,N6-trimethyllysine is present on K116. 5 residues coordinate Ca(2+): D130, D132, D134, H136, and E141.

It belongs to the calmodulin family.

Calmodulin mediates the control of a large number of enzymes, ion channels and other proteins by Ca(2+). Among the enzymes to be stimulated by the calmodulin-Ca(2+) complex are a number of protein kinases and phosphatases. The polypeptide is Calmodulin (Tetrahymena pyriformis).